The primary structure comprises 127 residues: uncharacterized protein (127 aa).

Its subcellular location is the mitochondrion. This is an uncharacterized protein from Arabidopsis thaliana (Mouse-ear cress).